The following is a 311-amino-acid chain: Heparan sulfate glucosamine 3-O-sulfotransferase 1 (311 aa).

The first 20 residues, 1 to 20 (MTLLLLGAVLLVAQPQLVPS), serve as a signal peptide directing secretion. An N-linked (GlcNAc...) asparagine glycan is attached at asparagine 52. Residues 68-72 (KGGTR), arginine 151, and serine 159 contribute to the 3'-phosphoadenylyl sulfate site. N-linked (GlcNAc...) asparagine glycosylation is found at asparagine 196, asparagine 246, and asparagine 253. Tyrosine 259 lines the 3'-phosphoadenylyl sulfate pocket. Cysteine 260 and cysteine 269 form a disulfide bridge. 274 to 278 (KGRAH) serves as a coordination point for 3'-phosphoadenylyl sulfate.

It belongs to the sulfotransferase 1 family.

It is found in the golgi apparatus lumen. It carries out the reaction alpha-D-glucosaminyl-[heparan sulfate](n) + 3'-phosphoadenylyl sulfate = 3-sulfo-alpha-D-glucosaminyl-[heparan sulfate](n) + adenosine 3',5'-bisphosphate + H(+). Functionally, sulfotransferase that utilizes 3'-phospho-5'-adenylyl sulfate (PAPS) to catalyze the transfer of a sulfo group to position 3 of glucosamine residues in heparan. Catalyzes the rate limiting step in the biosynthesis of heparan sulfate (HSact). This modification is a crucial step in the biosynthesis of anticoagulant heparan sulfate as it completes the structure of the antithrombin pentasaccharide binding site. The protein is Heparan sulfate glucosamine 3-O-sulfotransferase 1 (Hs3st1) of Rattus norvegicus (Rat).